Reading from the N-terminus, the 443-residue chain is L-ornithine N(5)-monooxygenase (443 aa).

FAD contacts are provided by residues 45–53 (DKQGDYRWH) and Gln-64. Residue Lys-69 coordinates substrate. Position 130 (Val-130) interacts with FAD. NADP(+) is bound by residues 215-218 (GGQS) and Arg-240. Substrate contacts are provided by residues 254–257 (NEVF) and Asn-284. Residue 284 to 286 (NYS) participates in NADP(+) binding. 407 to 409 (TLL) contacts FAD. Ser-410 is a binding site for substrate.

Belongs to the lysine N(6)-hydroxylase/L-ornithine N(5)-oxygenase family. In terms of assembly, homotetramer. The cofactor is FAD.

Its subcellular location is the cell inner membrane. It carries out the reaction L-ornithine + NADPH + O2 = N(5)-hydroxy-L-ornithine + NADP(+) + H2O. It functions in the pathway siderophore biosynthesis; pyoverdin biosynthesis. In terms of biological role, catalyzes the conversion of L-ornithine to N(5)-hydroxyornithine, the first step in the biosynthesis of all hydroxamate-containing siderophores, such as pyoverdin. Pyoverdin is a hydroxamate siderophore composed of a 6,7-dihydroxyquinoline-containing fluorescent chromophore joined to the N-terminus of a partly cyclic octapeptide (D-Ser-L-Arg-D-Ser-L-N(5)-OH-Orn-L-Lys-L-N(5)-OH-Orn-L-Thr-L-Thr in strain PAO1). Specific for NADPH, which plays a role in stabilization of the C4a-hydroperoxyflavin intermediate. This is L-ornithine N(5)-monooxygenase from Pseudomonas aeruginosa (strain ATCC 15692 / DSM 22644 / CIP 104116 / JCM 14847 / LMG 12228 / 1C / PRS 101 / PAO1).